Reading from the N-terminus, the 347-residue chain is Phenylalanine--tRNA ligase alpha subunit (347 aa).

The segment at 83–111 (QNLSGGDDSGADPTFDPTLPGTRPSLGHI) is disordered. Glutamate 274 lines the Mg(2+) pocket.

The protein belongs to the class-II aminoacyl-tRNA synthetase family. Phe-tRNA synthetase alpha subunit type 1 subfamily. In terms of assembly, tetramer of two alpha and two beta subunits. Requires Mg(2+) as cofactor.

It localises to the cytoplasm. It catalyses the reaction tRNA(Phe) + L-phenylalanine + ATP = L-phenylalanyl-tRNA(Phe) + AMP + diphosphate + H(+). The polypeptide is Phenylalanine--tRNA ligase alpha subunit (Rhodopirellula baltica (strain DSM 10527 / NCIMB 13988 / SH1)).